The primary structure comprises 191 residues: Leucyl/phenylalanyl-tRNA--protein transferase (191 aa).

The protein belongs to the L/F-transferase family.

The protein localises to the cytoplasm. It catalyses the reaction N-terminal L-lysyl-[protein] + L-leucyl-tRNA(Leu) = N-terminal L-leucyl-L-lysyl-[protein] + tRNA(Leu) + H(+). The enzyme catalyses N-terminal L-arginyl-[protein] + L-leucyl-tRNA(Leu) = N-terminal L-leucyl-L-arginyl-[protein] + tRNA(Leu) + H(+). It carries out the reaction L-phenylalanyl-tRNA(Phe) + an N-terminal L-alpha-aminoacyl-[protein] = an N-terminal L-phenylalanyl-L-alpha-aminoacyl-[protein] + tRNA(Phe). Functions in the N-end rule pathway of protein degradation where it conjugates Leu, Phe and, less efficiently, Met from aminoacyl-tRNAs to the N-termini of proteins containing an N-terminal arginine or lysine. In Nostoc sp. (strain PCC 7120 / SAG 25.82 / UTEX 2576), this protein is Leucyl/phenylalanyl-tRNA--protein transferase.